Here is an 83-residue protein sequence, read N- to C-terminus: Large ribosomal subunit protein eL14 (83 aa).

Belongs to the eukaryotic ribosomal protein eL14 family.

This is Large ribosomal subunit protein eL14 from Thermococcus onnurineus (strain NA1).